Here is a 42-residue protein sequence, read N- to C-terminus: Beta-defensin 13 (42 aa).

Intrachain disulfides connect C9–C38, C16–C31, and C21–C39.

It belongs to the beta-defensin family. Neutrophilic granules.

The protein resides in the secreted. Its function is as follows. Has bactericidal activity. Active against E.coli ML35 and S.aureus 502A. This is Beta-defensin 13 (DEFB13) from Bos taurus (Bovine).